A 230-amino-acid polypeptide reads, in one-letter code: MKITKTELFLRLAKPNEQGISRWVKTSEFAGEYKDLKLGNGGSWCRKDSPLARDYIVEFDKGLTSGNSIDAIRLNGFNQEKHFKQYIRKDIKDALKTRNCVMLGVNGKSENTKIEIDHKDGRKNNHRVSDIKTQKLEDFQPLCKAANDVKRQICKTCKETNKRWSAKNISGNPYAFYMGDENYSEELGCVGCYQYDPVEYRKSSVKRIAAEAAKYTSDYIFKKLYEEDNG.

The catalysed reaction is Endonucleolytic cleavage of DNA to give specific double-stranded fragments with terminal 5'-phosphates.. In terms of biological role, a P subtype restriction enzyme that recognizes the double-stranded sequence 5'-CATG-3' and cleaves after G-4. The protein is Type II restriction enzyme NlaIII (nlaIIIR) of Neisseria lactamica.